The sequence spans 29 residues: Toxin TdII-3 (29 aa).

Residues 1–29 (KDGYLVGTDGCKYGCFTRPGHFCANEECL) enclose the LCN-type CS-alpha/beta domain.

This sequence belongs to the long (4 C-C) scorpion toxin superfamily. Sodium channel inhibitor family. Beta subfamily. As to expression, expressed by the venom gland.

It localises to the secreted. Its function is as follows. Binds voltage-independently to sodium channels (Nav) and shifts the voltage of activation toward more negative potentials. This toxin is active against mammals and also affects neuromuscular preparations of frog. The chain is Toxin TdII-3 from Tityus discrepans (Venezuelan scorpion).